Here is a 166-residue protein sequence, read N- to C-terminus: Small ribosomal subunit protein uS5 (166 aa).

Positions 11–74 (LQEKLIAVNR…EKARRNMMNV (64 aa)) constitute an S5 DRBM domain.

This sequence belongs to the universal ribosomal protein uS5 family. Part of the 30S ribosomal subunit. Contacts proteins S4 and S8.

Functionally, with S4 and S12 plays an important role in translational accuracy. Located at the back of the 30S subunit body where it stabilizes the conformation of the head with respect to the body. In Pectobacterium atrosepticum (strain SCRI 1043 / ATCC BAA-672) (Erwinia carotovora subsp. atroseptica), this protein is Small ribosomal subunit protein uS5.